The primary structure comprises 513 residues: Chromosomal replication initiator protein DnaA (513 aa).

Residues 1–87 (MSVELWQQCV…IGSKRSSAPR (87 aa)) are domain I, interacts with DnaA modulators. Residues 87–176 (RAAPNAPLAA…QVEGALKHTS (90 aa)) form a domain II region. The segment at 113 to 163 (AAPAPAPAPTSAPAKKAAAQKAAEVSEEPSRDSFDPMAGASSQQAPVRAEQ) is disordered. Residues 123 to 135 (SAPAKKAAAQKAA) are compositionally biased toward low complexity. The tract at residues 177–393 (YLNRTFTFEN…GALKRVIAHS (217 aa)) is domain III, AAA+ region. Residues Gly221, Gly223, Lys224, and Thr225 each coordinate ATP. The segment at 394–513 (HFMGRDITIE…YKNLLRTLTT (120 aa)) is domain IV, binds dsDNA.

It belongs to the DnaA family. As to quaternary structure, oligomerizes as a right-handed, spiral filament on DNA at oriC.

The protein resides in the cytoplasm. Functionally, plays an essential role in the initiation and regulation of chromosomal replication. ATP-DnaA binds to the origin of replication (oriC) to initiate formation of the DNA replication initiation complex once per cell cycle. Binds the DnaA box (a 9 base pair repeat at the origin) and separates the double-stranded (ds)DNA. Forms a right-handed helical filament on oriC DNA; dsDNA binds to the exterior of the filament while single-stranded (ss)DNA is stabiized in the filament's interior. The ATP-DnaA-oriC complex binds and stabilizes one strand of the AT-rich DNA unwinding element (DUE), permitting loading of DNA polymerase. After initiation quickly degrades to an ADP-DnaA complex that is not apt for DNA replication. Binds acidic phospholipids. This is Chromosomal replication initiator protein DnaA from Pseudomonas fluorescens (strain ATCC BAA-477 / NRRL B-23932 / Pf-5).